The primary structure comprises 106 residues: Urease subunit beta (106 aa).

Belongs to the urease beta subunit family. As to quaternary structure, heterotrimer of UreA (gamma), UreB (beta) and UreC (alpha) subunits. Three heterotrimers associate to form the active enzyme. The apoenzyme interacts with an accessory complex composed of UreD, UreF and UreG, which is required for the assembly of the nickel containing metallocenter of UreC. The UreE protein may also play a direct role as a metallochaperone in nickel transfer to the urease apoprotein.

It localises to the cytoplasm. It catalyses the reaction urea + 2 H2O + H(+) = hydrogencarbonate + 2 NH4(+). It functions in the pathway nitrogen metabolism; urea degradation; CO(2) and NH(3) from urea (urease route): step 1/1. With respect to regulation, the apoenzyme can be activated in vitro in the presence of nickel ions and carbon dioxide, which promotes carboxylation of 'Lys-217' of the UreC (alpha) subunit. The sequence is that of Urease subunit beta from Klebsiella aerogenes (Enterobacter aerogenes).